A 310-amino-acid polypeptide reads, in one-letter code: Low-salt glycan biosynthesis protein Agl12 (310 aa).

Residues 7–13, 32–35, and 58–59 each bind NAD(+); these read GGAGFIG, DALT, and DI. Ser-82 contributes to the substrate binding site. Thr-97 provides a ligand contact to NAD(+). Residues Thr-122 and 122–124 contribute to the substrate site; that span reads TDE. Residue Asp-123 is the Proton donor of the active site. Catalysis depends on proton acceptor residues Glu-124 and Tyr-146. 146–150 is an NAD(+) binding site; that stretch reads YSATK. Asn-175 contacts substrate. Residue Asn-176 participates in NAD(+) binding. Substrate-binding positions include 185–186, 201–203, Arg-210, Asn-245, and 269–272; these read KL, PVY, and RAGH.

This sequence belongs to the NAD(P)-dependent epimerase/dehydratase family. dTDP-glucose dehydratase subfamily. Requires NAD(+) as cofactor.

Its pathway is protein modification; protein glycosylation. It participates in cell surface structure biogenesis; S-layer biogenesis. Lyase involved in N-glycan biosynthetic pathway that takes place under low-salt conditions (1.75 M instead of 3.4 M). Participates in the formation of the tetrasaccharide present at 'Asn-532' of S-layer glycoprotein Csg, consisting of a sulfated hexose, 2 hexoses and rhamnose. Involved in the addition of final rhamnose (sugar 4) of the tetrasaccharide on the dolichol phosphate carrier. The chain is Low-salt glycan biosynthesis protein Agl12 (agl12) from Haloferax volcanii (strain ATCC 29605 / DSM 3757 / JCM 8879 / NBRC 14742 / NCIMB 2012 / VKM B-1768 / DS2) (Halobacterium volcanii).